The chain runs to 937 residues: Isoleucine--tRNA ligase (937 aa).

Positions 58-68 match the 'HIGH' region motif; sequence PYANGNIHIGH. Glutamate 560 provides a ligand contact to L-isoleucyl-5'-AMP. The 'KMSKS' region motif lies at 601 to 605; the sequence is KMSKS. Residue lysine 604 coordinates ATP. Zn(2+) is bound by residues cysteine 900, cysteine 903, cysteine 920, and cysteine 923.

Belongs to the class-I aminoacyl-tRNA synthetase family. IleS type 1 subfamily. Monomer. It depends on Zn(2+) as a cofactor.

The protein resides in the cytoplasm. It carries out the reaction tRNA(Ile) + L-isoleucine + ATP = L-isoleucyl-tRNA(Ile) + AMP + diphosphate. Catalyzes the attachment of isoleucine to tRNA(Ile). As IleRS can inadvertently accommodate and process structurally similar amino acids such as valine, to avoid such errors it has two additional distinct tRNA(Ile)-dependent editing activities. One activity is designated as 'pretransfer' editing and involves the hydrolysis of activated Val-AMP. The other activity is designated 'posttransfer' editing and involves deacylation of mischarged Val-tRNA(Ile). The protein is Isoleucine--tRNA ligase of Thioalkalivibrio sulfidiphilus (strain HL-EbGR7).